The following is a 138-amino-acid chain: Superoxide dismutase [Mn] (138 aa).

Residues serine 1, histidine 49, aspartate 133, and histidine 137 each coordinate Mn(2+).

It belongs to the iron/manganese superoxide dismutase family. The cofactor is Mn(2+).

It carries out the reaction 2 superoxide + 2 H(+) = H2O2 + O2. Its function is as follows. Destroys superoxide anion radicals which are normally produced within the cells and which are toxic to biological systems. The polypeptide is Superoxide dismutase [Mn] (sodA) (Mycobacterium marinum).